The chain runs to 1238 residues: uncharacterized protein (1238 aa).

Disordered regions lie at residues 1–38, 122–156, 229–439, 660–1016, 1051–1083, and 1098–1191; these read MSSK…DISS, SSTP…RPSF, PKNN…KNKE, KNKL…TGAA, EEED…KLNS, and KKSG…NASR. Low complexity-rich tracts occupy residues 10–26, 129–149, and 234–276; these read NKNN…NNNN, LSPF…QSPL, and QIDS…TQSQ. The segment covering 317-343 has biased composition (polar residues); it reads ELQNQTQINKSKQDLTNISQKINITTS. Residues 344–361 show a composition bias toward basic and acidic residues; sequence QHDKDDLGEYRMSEKGGG. The span at 362-372 shows a compositional bias: acidic residues; sequence DDGDDDDDYDN. Positions 383 to 394 are enriched in basic residues; sequence TNKKQQQQHHHK. Positions 395–416 are enriched in basic and acidic residues; it reads GKEESQSEYYEKEKEKEKEDIA. 3 stretches are compositionally biased toward low complexity: residues 417 to 435, 678 to 691, and 712 to 792; these read TTRA…NNIN, QQQQ…QQQE, and QPSQ…QEKQ. Residues 793-805 are compositionally biased toward basic and acidic residues; sequence QSQEKHQSQEKHQ. 2 stretches are compositionally biased toward low complexity: residues 806–859 and 882–906; these read SQQS…SQQK and SQSQ…QSQR. Residues 916–927 show a composition bias toward acidic residues; the sequence is ENQDSENLDDTV. A compositionally biased stretch (polar residues) spans 929 to 944; sequence MNYNQIPSTLDHSTLQ. The span at 966–975 shows a compositional bias: basic and acidic residues; that stretch reads EIERRRRELA. Acidic residues predominate over residues 976–990; it reads GEDSDEEFEILDEDQ. 2 stretches are compositionally biased toward low complexity: residues 1062–1083 and 1108–1121; these read QNNN…KLNS and SSSS…NKKN. The segment covering 1123-1133 has biased composition (polar residues); sequence PQPTKSVNKPR. Over residues 1142–1181 the composition is skewed to low complexity; the sequence is SQNRQKQSEQQQQQPQQQPQLPQQQQQQQQQQQLRQQQNE. The span at 1182–1191 shows a compositional bias: polar residues; it reads NTISSLNASR.

This is an uncharacterized protein from Dictyostelium discoideum (Social amoeba).